A 520-amino-acid chain; its full sequence is Na(+)/H(+) antiporter NhaB (520 aa).

12 helical membrane passes run 27–49, 62–82, 97–117, 120–140, 144–164, 202–222, 238–258, 303–323, 348–368, 391–411, 447–467, and 475–495; these read GFLILNPLVFWVSPFTAGWLLVI, YPLLPGGLLAVEALFIGMTSA, LLLIFMVAGIYFMKQLLLLIF, LLLGIRSKTLLSLAFCFAAAF, FLDALTVVAVVISVAVGFYGI, LMMHAGVGTALGGVMTMVGEP, FLLRVAPVSVPVFICGIVTCI, GLIGVWLITALALHLAEVGLI, TEALPFTALLTVFFAVVAVII, LFYLFNGLLSSISDNVFVGTV, ATPNGQAAFLFLLTSALAPLI, and VWMALPYTIVLTLVGLACVQF.

The protein belongs to the NhaB Na(+)/H(+) (TC 2.A.34) antiporter family.

The protein localises to the cell inner membrane. The catalysed reaction is 2 Na(+)(in) + 3 H(+)(out) = 2 Na(+)(out) + 3 H(+)(in). Functionally, na(+)/H(+) antiporter that extrudes sodium in exchange for external protons. This Cronobacter sakazakii (strain ATCC BAA-894) (Enterobacter sakazakii) protein is Na(+)/H(+) antiporter NhaB.